The chain runs to 142 residues: Large ribosomal subunit protein uL11 (142 aa).

Belongs to the universal ribosomal protein uL11 family. Part of the ribosomal stalk of the 50S ribosomal subunit. Interacts with L10 and the large rRNA to form the base of the stalk. L10 forms an elongated spine to which L12 dimers bind in a sequential fashion forming a multimeric L10(L12)X complex. Post-translationally, one or more lysine residues are methylated.

Functionally, forms part of the ribosomal stalk which helps the ribosome interact with GTP-bound translation factors. This Shewanella frigidimarina (strain NCIMB 400) protein is Large ribosomal subunit protein uL11.